Consider the following 747-residue polypeptide: Putative ankyrin repeat protein FPV222 (747 aa).

ANK repeat units follow at residues 38–67 (DNCT…DPNI), 103–132 (NYRN…LVNM), 136–165 (KNIT…NTNA), 169–198 (YGET…NVNV), 202–231 (DSIT…DTNA), 234–263 (LERF…NTNV), 294–323 (PCTV…NPDI), 328–357 (TSTY…YTDV), 361–393 (QQNT…SFNL), 397–426 (KGRT…DTNI), 430–460 (MSFT…DPNL), 464–493 (KEVS…DIKP), 495–524 (NECY…ELEV), and 529–559 (DHYV…DLNK).

This chain is Putative ankyrin repeat protein FPV222, found in Vertebrata (FPV).